Consider the following 308-residue polypeptide: MSEITAAMVKELREKTGAGMMDCKKALAETGGDMEAAIDWLRAKGIAKADKKSGRTAAEGLIGVSSQGTKAVVVEVNSETDFVARNDAFQDLVRGIAKVAVSTNGSVDAVAAATYPASGKSVSDTIKDAIATIGENMNLRRSVALSVEDGVVATYIHNAVSDGLGKLGVLVALKSTGDKEALNAIGRQVAMHIAATAPLAIRPEEVDAAVAERERNVFIEQSRASGKPDNIIEKMVDGRMRKFFEEVALLSQAFVINPDLTVAAAVKEAEKAVGAPIEVAGMARLLLGEGVEKEETDFAAEVAAAVKG.

The involved in Mg(2+) ion dislocation from EF-Tu stretch occupies residues 80–83 (TDFV).

Belongs to the EF-Ts family.

It localises to the cytoplasm. Associates with the EF-Tu.GDP complex and induces the exchange of GDP to GTP. It remains bound to the aminoacyl-tRNA.EF-Tu.GTP complex up to the GTP hydrolysis stage on the ribosome. In Rhizobium leguminosarum bv. trifolii (strain WSM2304), this protein is Elongation factor Ts.